The following is a 515-amino-acid chain: Lysosomal acid glucosylceramidase (515 aa).

An N-terminal signal peptide occupies residues 1–19; sequence MAARLIGFFLFQAVSWAYG. 2 disulfide bridges follow: C23/C35 and C37/C42. N-linked (GlcNAc...) asparagine glycosylation is found at N38 and N78. N165 carries an N-linked (GlcNAc...) (high mannose) asparagine glycan. Residue E254 is the Proton donor of the active site. N289 is a glycosylation site (N-linked (GlcNAc...) asparagine). E358 functions as the Nucleophile in the catalytic mechanism. Residue N480 is glycosylated (N-linked (GlcNAc...) asparagine).

This sequence belongs to the glycosyl hydrolase 30 family. Interacts with saposin-C. Interacts with SCARB2. Interacts with TCP1. Interacts with GRN; this interaction prevents aggregation of GBA1-SCARB2 complex via interaction with HSPA1A upon stress.

It is found in the lysosome membrane. The catalysed reaction is a beta-D-glucosyl-(1&lt;-&gt;1')-N-acylsphing-4-enine + H2O = an N-acylsphing-4-enine + D-glucose. The enzyme catalyses a beta-D-galactosyl-(1&lt;-&gt;1')-N-acylsphing-4-enine + H2O = an N-acylsphing-4-enine + D-galactose. It catalyses the reaction cholesteryl 3-beta-D-glucoside + H2O = cholesterol + D-glucose. It carries out the reaction a beta-D-glucosyl-(1&lt;-&gt;1')-N-acylsphing-4-enine + cholesterol = cholesteryl 3-beta-D-glucoside + an N-acylsphing-4-enine. The catalysed reaction is beta-D-glucosyl-(1&lt;-&gt;1')-N-hexadecanoylsphing-4-enine + cholesterol = cholesteryl 3-beta-D-glucoside + N-hexadecanoylsphing-4-enine. The enzyme catalyses beta-D-glucosyl-N-(9Z-octadecenoyl)-sphing-4E-enine + cholesterol = N-(9Z-octadecenoyl)-sphing-4-enine + cholesteryl 3-beta-D-glucoside. It catalyses the reaction beta-D-glucosyl-N-octanoylsphing-4E-enine + cholesterol = N-octanoylsphing-4-enine + cholesteryl 3-beta-D-glucoside. It carries out the reaction beta-D-glucosyl-N-dodecanoylsphing-4-enine + cholesterol = N-dodecanoylsphing-4-enine + cholesteryl 3-beta-D-glucoside. The catalysed reaction is beta-D-glucosyl-(1&lt;-&gt;1)-N-octadecanoylsphing-4-enine + cholesterol = N-octadecanoylsphing-4-enine + cholesteryl 3-beta-D-glucoside. The enzyme catalyses beta-D-glucosyl-(1&lt;-&gt;1')-N-(15Z-tetracosenoyl)-sphing-4-enine + cholesterol = N-(15Z-tetracosenoyl)-sphing-4-enine + cholesteryl 3-beta-D-glucoside. It catalyses the reaction a beta-D-galactosyl-(1&lt;-&gt;1')-N-acylsphing-4-enine + cholesterol = cholesteryl 3-beta-D-galactoside + an N-acylsphing-4-enine. It carries out the reaction 1-(beta-D-galactosyl)-N-dodecanoylsphing-4-enine + cholesterol = cholesteryl 3-beta-D-galactoside + N-dodecanoylsphing-4-enine. The catalysed reaction is a beta-D-xylosyl-(1&lt;-&gt;1')-N-acylsphing-4-enine + cholesterol = cholesteryl 3-beta-D-xyloside + an N-acylsphing-4-enine. The enzyme catalyses beta-D-xylosyl-(1&lt;-&gt;1')-N-(9Z-octadecenoyl)-sphing-4-enine + cholesterol = cholesteryl 3-beta-D-xyloside + N-(9Z-octadecenoyl)-sphing-4-enine. The protein operates within steroid metabolism; cholesterol metabolism. It participates in sphingolipid metabolism. With respect to regulation, inhibited by conduritol B epoxide/CBE. Its function is as follows. Glucosylceramidase that catalyzes, within the lysosomal compartment, the hydrolysis of glucosylceramides/GlcCers (such as beta-D-glucosyl-(1&lt;-&gt;1')-N-acylsphing-4-enine) into free ceramides (such as N-acylsphing-4-enine) and glucose. Plays a central role in the degradation of complex lipids and the turnover of cellular membranes. Through the production of ceramides, participates in the PKC-activated salvage pathway of ceramide formation. Catalyzes the glucosylation of cholesterol, through a transglucosylation reaction where glucose is transferred from GlcCer to cholesterol. GlcCer containing mono-unsaturated fatty acids (such as beta-D-glucosyl-N-(9Z-octadecenoyl)-sphing-4-enine) are preferred as glucose donors for cholesterol glucosylation when compared with GlcCer containing same chain length of saturated fatty acids (such as beta-D-glucosyl-N-octadecanoyl-sphing-4-enine). Under specific conditions, may alternatively catalyze the reverse reaction, transferring glucose from cholesteryl 3-beta-D-glucoside to ceramide. Can also hydrolyze cholesteryl 3-beta-D-glucoside producing glucose and cholesterol. Catalyzes the hydrolysis of galactosylceramides/GalCers (such as beta-D-galactosyl-(1&lt;-&gt;1')-N-acylsphing-4-enine), as well as the transfer of galactose between GalCers and cholesterol in vitro, but with lower activity than with GlcCers. Contrary to GlcCer and GalCer, xylosylceramide/XylCer (such as beta-D-xyosyl-(1&lt;-&gt;1')-N-acylsphing-4-enine) is not a good substrate for hydrolysis, however it is a good xylose donor for transxylosylation activity to form cholesteryl 3-beta-D-xyloside. The protein is Lysosomal acid glucosylceramidase (Gba1) of Mus musculus (Mouse).